Consider the following 381-residue polypeptide: E3 ubiquitin-protein ligase Fancl (381 aa).

A UBC-RWD region (URD) region spans residues asparagine 110 to proline 293. The RING-CH-type; degenerate zinc-finger motif lies at glutamate 303–serine 374. 8 residues coordinate Zn(2+): cysteine 311, cysteine 314, cysteine 329, cysteine 334, histidine 339, cysteine 342, cysteine 364, and cysteine 367.

In terms of assembly, interacts (via C-terminus) with FANCI and Fancd2.

It is found in the nucleus. The enzyme catalyses S-ubiquitinyl-[E2 ubiquitin-conjugating enzyme]-L-cysteine + [acceptor protein]-L-lysine = [E2 ubiquitin-conjugating enzyme]-L-cysteine + N(6)-ubiquitinyl-[acceptor protein]-L-lysine.. It participates in protein modification; protein ubiquitination. Functionally, ubiquitin ligase protein that mediates monoubiquitination of Fancd2. Ubiquitination of Fancd2 is stimulated by ionising radiation. Together with Fancd2, and probably FANCI, involved in DNA repair of damage caused by agents that induce interstrand cross-links but not agents that cause double strand breaks. The sequence is that of E3 ubiquitin-protein ligase Fancl from Drosophila melanogaster (Fruit fly).